The following is a 385-amino-acid chain: Putative 8-amino-7-oxononanoate synthase (385 aa).

R21 contacts substrate. 108 to 109 contributes to the pyridoxal 5'-phosphate binding site; the sequence is GY. H133 serves as a coordination point for substrate. Residues S182, 207 to 210, and 234 to 237 contribute to the pyridoxal 5'-phosphate site; these read DEAH and TFGK. K237 carries the post-translational modification N6-(pyridoxal phosphate)lysine. S351 provides a ligand contact to substrate.

This sequence belongs to the class-II pyridoxal-phosphate-dependent aminotransferase family. BioF subfamily. In terms of assembly, homodimer. Pyridoxal 5'-phosphate is required as a cofactor.

It carries out the reaction 6-carboxyhexanoyl-[ACP] + L-alanine + H(+) = (8S)-8-amino-7-oxononanoate + holo-[ACP] + CO2. Its pathway is cofactor biosynthesis; biotin biosynthesis. Its function is as follows. Catalyzes the decarboxylative condensation of pimeloyl-[acyl-carrier protein] and L-alanine to produce 8-amino-7-oxononanoate (AON), [acyl-carrier protein], and carbon dioxide. The protein is Putative 8-amino-7-oxononanoate synthase (bioF) of Desulfosudis oleivorans (strain DSM 6200 / JCM 39069 / Hxd3) (Desulfococcus oleovorans).